The primary structure comprises 413 residues: Serine hydroxymethyltransferase (413 aa).

Residues Leu117 and 121 to 123 (GHL) contribute to the (6S)-5,6,7,8-tetrahydrofolate site. Lys226 carries the post-translational modification N6-(pyridoxal phosphate)lysine. Residues Glu239 and 349 to 351 (SPF) each bind (6S)-5,6,7,8-tetrahydrofolate.

This sequence belongs to the SHMT family. As to quaternary structure, homodimer. Pyridoxal 5'-phosphate serves as cofactor.

The protein resides in the cytoplasm. The enzyme catalyses (6R)-5,10-methylene-5,6,7,8-tetrahydrofolate + glycine + H2O = (6S)-5,6,7,8-tetrahydrofolate + L-serine. Its pathway is one-carbon metabolism; tetrahydrofolate interconversion. It participates in amino-acid biosynthesis; glycine biosynthesis; glycine from L-serine: step 1/1. In terms of biological role, catalyzes the reversible interconversion of serine and glycine with tetrahydrofolate (THF) serving as the one-carbon carrier. This reaction serves as the major source of one-carbon groups required for the biosynthesis of purines, thymidylate, methionine, and other important biomolecules. Also exhibits THF-independent aldolase activity toward beta-hydroxyamino acids, producing glycine and aldehydes, via a retro-aldol mechanism. The chain is Serine hydroxymethyltransferase from Bacillus cereus (strain G9842).